The chain runs to 200 residues: Adenylate kinase (200 aa).

Residue 11-16 coordinates ATP; sequence GAGKGT. Residues 31–60 are NMP; it reads STGDIFRQNIKDRTELGQQVQALVDAGNYV. AMP-binding positions include Thr-32, Arg-37, 58-60, 86-89, and Gln-93; these read NYV and GYPR. The LID stretch occupies residues 127 to 137; sequence RRAAEQGRADD. An ATP-binding site is contributed by Arg-128. AMP contacts are provided by Arg-134 and Arg-145. Residue Gly-173 coordinates ATP.

The protein belongs to the adenylate kinase family. In terms of assembly, monomer.

It localises to the cytoplasm. The enzyme catalyses AMP + ATP = 2 ADP. Its pathway is purine metabolism; AMP biosynthesis via salvage pathway; AMP from ADP: step 1/1. Its function is as follows. Catalyzes the reversible transfer of the terminal phosphate group between ATP and AMP. Plays an important role in cellular energy homeostasis and in adenine nucleotide metabolism. The chain is Adenylate kinase from Clavibacter michiganensis subsp. michiganensis (strain NCPPB 382).